The primary structure comprises 647 residues: MSSEERSRQPSTVSTFDLEPNPFEQSFASSKKALSLPGTISHPSLPKELSRNNSTSTITQHSQRSTHSLNSIPEENGNSTVTDNSNHNDVKKDSPSFLPGQQRPTIISPPILTPGGSKRLPPLLLSPSILYQANSTTNPSQNSHSVSVSNSNPSAIGVSSTSGSLYPNSSSPSGTSLIRQPRNSNVTTSNSGNGFPTNDSQMPGFLLNLSKSGLTPNESNIRTGLTPGILTQSYNYPVLPSINKNTITGSKNVNKSVTVNGSIENHPHVNIMHPTVNGTPLTPGLSSLLNLPSTGVLANPVFKSTPTTNTTDGTVNNSISNSNFSPNTSTKAAVKMDNPAEFNAIEHSAHNHKENENLTTQIENNDQFNNKTRKRKRRMSSTSSTSKASRKNSISRKNSAVTTAPAQKDDVENNKISNNVTLDENEEQERKRKEFLERNRVAASKFRKRKKEYIKKIENDLQFYESEYDDLTQVIGKLCGIIPSSSSNSQFNVNVSTPSSSSPPSTSLIALLESSISRSDYSSAMSVLSNMKQLICETNFYRRGGKNPRDDMDGQEDSFNKDTNVVKSENAGYPSVNSRPIILDKKYSLNSGANISKSNTTTNNVGNSAQNIINSCYSVTNPLVINANSDTHDTNKHDVLSTLPHNN.

Disordered regions lie at residues 1–119 (MSSE…GSKR), 135–204 (STTN…QMPG), 305–331 (TPTT…TSTK), and 353–429 (KENE…EEQE). Over residues 51 to 85 (RNNSTSTITQHSQRSTHSLNSIPEENGNSTVTDNS) the composition is skewed to polar residues. The residue at position 94 (Ser94) is a Phosphoserine. Thr113 carries the post-translational modification Phosphothreonine. Low complexity-rich tracts occupy residues 138–194 (NPSQ…SGNG) and 305–329 (TPTT…PNTS). Polar residues-rich tracts occupy residues 357–368 (NLTTQIENNDQF) and 396–405 (RKNSAVTTAP). Residue Ser399 is modified to Phosphoserine. In terms of domain architecture, bZIP spans 429–492 (ERKRKEFLER…PSSSSNSQFN (64 aa)). Residues 430–451 (RKRKEFLERNRVAASKFRKRKK) are basic motif. Residues 454 to 461 (IKKIENDL) are leucine-zipper. The residue at position 558 (Ser558) is a Phosphoserine.

This sequence belongs to the bZIP family.

Its subcellular location is the nucleus. In terms of biological role, binds to the CRE motif 5'-TGACGTCA-3' and acts as a repressor of transcription of the SUC2 gene and most probably other genes. The sequence is that of CRE-binding bZIP protein SKO1 (SKO1) from Saccharomyces cerevisiae (strain ATCC 204508 / S288c) (Baker's yeast).